We begin with the raw amino-acid sequence, 186 residues long: MSEPASISTGIAARYATAMFELAEEAKALPALEKDVDALDAALSESADLRDLIHSPIYGRDEASAAIGGVADAMKLQDMTGNTLRLMASKRRLFVLPALLSELRERIADHKGEVTAEVTSAKALTKTQLDKLTKSLKAQVGKTVTVKETVDENIIGGLIVKIGSKMIDTSVRSKLNALQNTMKEVG.

This sequence belongs to the ATPase delta chain family. In terms of assembly, F-type ATPases have 2 components, F(1) - the catalytic core - and F(0) - the membrane proton channel. F(1) has five subunits: alpha(3), beta(3), gamma(1), delta(1), epsilon(1). CF(0) has four main subunits: a(1), b(1), b'(1) and c(10-14). The alpha and beta chains form an alternating ring which encloses part of the gamma chain. F(1) is attached to F(0) by a central stalk formed by the gamma and epsilon chains, while a peripheral stalk is formed by the delta, b and b' chains.

The protein localises to the cell inner membrane. In terms of biological role, f(1)F(0) ATP synthase produces ATP from ADP in the presence of a proton or sodium gradient. F-type ATPases consist of two structural domains, F(1) containing the extramembraneous catalytic core and F(0) containing the membrane proton channel, linked together by a central stalk and a peripheral stalk. During catalysis, ATP synthesis in the catalytic domain of F(1) is coupled via a rotary mechanism of the central stalk subunits to proton translocation. Functionally, this protein is part of the stalk that links CF(0) to CF(1). It either transmits conformational changes from CF(0) to CF(1) or is implicated in proton conduction. This chain is ATP synthase subunit delta, found in Jannaschia sp. (strain CCS1).